A 458-amino-acid polypeptide reads, in one-letter code: Phosphoglucosamine mutase (458 aa).

Residue Ser-109 is the Phosphoserine intermediate of the active site. Mg(2+) contacts are provided by Ser-109, Asp-251, Asp-253, and Asp-255. Ser-109 bears the Phosphoserine mark.

Belongs to the phosphohexose mutase family. It depends on Mg(2+) as a cofactor. Activated by phosphorylation.

It catalyses the reaction alpha-D-glucosamine 1-phosphate = D-glucosamine 6-phosphate. Catalyzes the conversion of glucosamine-6-phosphate to glucosamine-1-phosphate. This Myxococcus xanthus (strain DK1622) protein is Phosphoglucosamine mutase.